A 223-amino-acid chain; its full sequence is Type III pantothenate kinase (223 aa).

An ATP-binding site is contributed by 17–24 (DIGNTRIH). Substrate contacts are provided by residues Tyr-81 and 85-88 (GIDR). Asp-87 serves as the catalytic Proton acceptor. Asp-102 is a binding site for K(+). Residue Ser-105 coordinates ATP. Thr-157 lines the substrate pocket.

Belongs to the type III pantothenate kinase family. As to quaternary structure, homodimer. Requires NH4(+) as cofactor. The cofactor is K(+).

The protein resides in the cytoplasm. It catalyses the reaction (R)-pantothenate + ATP = (R)-4'-phosphopantothenate + ADP + H(+). It participates in cofactor biosynthesis; coenzyme A biosynthesis; CoA from (R)-pantothenate: step 1/5. Not regulated by feedback inhibition by CoA and its thioesters as described for many other pantothenate kinases. Not inhibited by N-pentylpantothenamide (N5-Pan), and this compound cannot act as a substrate either. Catalyzes the phosphorylation of pantothenate (Pan), the first step in CoA biosynthesis. Can also utilize CTP or GTP instead of ATP as a phosphoryl donor, albeit to a lesser extent. The polypeptide is Type III pantothenate kinase (coaX) (Helicobacter pylori (strain ATCC 700392 / 26695) (Campylobacter pylori)).